The chain runs to 433 residues: Enolase (433 aa).

Q167 serves as a coordination point for (2R)-2-phosphoglycerate. The active-site Proton donor is E209. 3 residues coordinate Mg(2+): D246, E291, and D318. K343, R372, S373, and K394 together coordinate (2R)-2-phosphoglycerate. K343 (proton acceptor) is an active-site residue.

Belongs to the enolase family. In terms of assembly, component of the RNA degradosome, a multiprotein complex involved in RNA processing and mRNA degradation. The cofactor is Mg(2+).

The protein resides in the cytoplasm. It is found in the secreted. The protein localises to the cell surface. It catalyses the reaction (2R)-2-phosphoglycerate = phosphoenolpyruvate + H2O. Its pathway is carbohydrate degradation; glycolysis; pyruvate from D-glyceraldehyde 3-phosphate: step 4/5. Its function is as follows. Catalyzes the reversible conversion of 2-phosphoglycerate (2-PG) into phosphoenolpyruvate (PEP). It is essential for the degradation of carbohydrates via glycolysis. This is Enolase from Vibrio vulnificus (strain CMCP6).